Here is a 963-residue protein sequence, read N- to C-terminus: Glycine dehydrogenase (decarboxylating) (963 aa).

K710 bears the N6-(pyridoxal phosphate)lysine mark.

It belongs to the GcvP family. In terms of assembly, the glycine cleavage system is composed of four proteins: P, T, L and H. Requires pyridoxal 5'-phosphate as cofactor.

The catalysed reaction is N(6)-[(R)-lipoyl]-L-lysyl-[glycine-cleavage complex H protein] + glycine + H(+) = N(6)-[(R)-S(8)-aminomethyldihydrolipoyl]-L-lysyl-[glycine-cleavage complex H protein] + CO2. Functionally, the glycine cleavage system catalyzes the degradation of glycine. The P protein binds the alpha-amino group of glycine through its pyridoxal phosphate cofactor; CO(2) is released and the remaining methylamine moiety is then transferred to the lipoamide cofactor of the H protein. This Pseudoalteromonas translucida (strain TAC 125) protein is Glycine dehydrogenase (decarboxylating).